We begin with the raw amino-acid sequence, 271 residues long: Tryptophan synthase alpha chain (271 aa).

Active-site proton acceptor residues include glutamate 49 and aspartate 60.

This sequence belongs to the TrpA family. As to quaternary structure, tetramer of two alpha and two beta chains.

It carries out the reaction (1S,2R)-1-C-(indol-3-yl)glycerol 3-phosphate + L-serine = D-glyceraldehyde 3-phosphate + L-tryptophan + H2O. The protein operates within amino-acid biosynthesis; L-tryptophan biosynthesis; L-tryptophan from chorismate: step 5/5. Functionally, the alpha subunit is responsible for the aldol cleavage of indoleglycerol phosphate to indole and glyceraldehyde 3-phosphate. In Burkholderia ambifaria (strain MC40-6), this protein is Tryptophan synthase alpha chain.